A 398-amino-acid chain; its full sequence is Acetate kinase (398 aa).

Asparagine 10 contacts Mg(2+). Lysine 17 lines the ATP pocket. Arginine 91 contacts substrate. Catalysis depends on aspartate 148, which acts as the Proton donor/acceptor. ATP is bound by residues 208–212 (HLGNG), 283–285 (DCR), and 331–335 (GIGEN). Residue glutamate 385 participates in Mg(2+) binding.

The protein belongs to the acetokinase family. As to quaternary structure, homodimer. It depends on Mg(2+) as a cofactor. Mn(2+) is required as a cofactor.

The protein localises to the cytoplasm. The enzyme catalyses acetate + ATP = acetyl phosphate + ADP. It participates in metabolic intermediate biosynthesis; acetyl-CoA biosynthesis; acetyl-CoA from acetate: step 1/2. Functionally, catalyzes the formation of acetyl phosphate from acetate and ATP. Can also catalyze the reverse reaction. The chain is Acetate kinase from Shewanella loihica (strain ATCC BAA-1088 / PV-4).